A 516-amino-acid chain; its full sequence is GMP synthase [glutamine-hydrolyzing] (516 aa).

The Glutamine amidotransferase type-1 domain maps to 7–199; it reads KIIILDFGSQ…VFGLCKCQAT (193 aa). C84 serves as the catalytic Nucleophile. Catalysis depends on residues H173 and E175. Residues 200–391 form the GMPS ATP-PPase domain; that stretch reads WTMQGFIESN…LGLPDEAVHR (192 aa). 227–233 lines the ATP pocket; that stretch reads SGGVDSS.

As to quaternary structure, homodimer.

It catalyses the reaction XMP + L-glutamine + ATP + H2O = GMP + L-glutamate + AMP + diphosphate + 2 H(+). The protein operates within purine metabolism; GMP biosynthesis; GMP from XMP (L-Gln route): step 1/1. Catalyzes the synthesis of GMP from XMP. In Desulfotalea psychrophila (strain LSv54 / DSM 12343), this protein is GMP synthase [glutamine-hydrolyzing].